The following is a 445-amino-acid chain: tRNA(Ile)-lysidine synthase (445 aa).

19–24 (SGGIDS) provides a ligand contact to ATP.

The protein belongs to the tRNA(Ile)-lysidine synthase family.

The protein resides in the cytoplasm. The enzyme catalyses cytidine(34) in tRNA(Ile2) + L-lysine + ATP = lysidine(34) in tRNA(Ile2) + AMP + diphosphate + H(+). Ligates lysine onto the cytidine present at position 34 of the AUA codon-specific tRNA(Ile) that contains the anticodon CAU, in an ATP-dependent manner. Cytidine is converted to lysidine, thus changing the amino acid specificity of the tRNA from methionine to isoleucine. The sequence is that of tRNA(Ile)-lysidine synthase from Buchnera aphidicola subsp. Schizaphis graminum (strain Sg).